A 72-amino-acid polypeptide reads, in one-letter code: Small ribosomal subunit protein bS20 (72 aa).

The protein belongs to the bacterial ribosomal protein bS20 family.

Functionally, binds directly to 16S ribosomal RNA. In Klebsiella pneumoniae, this protein is Small ribosomal subunit protein bS20 (rpsT).